Reading from the N-terminus, the 329-residue chain is Probable carboxylesterase 13 (329 aa).

M1 is modified (N-acetylmethionine). The short motif at 81 to 83 (HGG) is the Involved in the stabilization of the negatively charged intermediate by the formation of the oxyanion hole element. Active-site residues include S165, D269, and H302.

This sequence belongs to the 'GDXG' lipolytic enzyme family. As to expression, expressed in flowers.

It carries out the reaction a carboxylic ester + H2O = an alcohol + a carboxylate + H(+). Its function is as follows. Carboxylesterase acting on esters with varying acyl chain length. The protein is Probable carboxylesterase 13 (CXE13) of Arabidopsis thaliana (Mouse-ear cress).